Here is a 210-residue protein sequence, read N- to C-terminus: Adenylate kinase (210 aa).

Glycine 10–threonine 15 contacts ATP. The NMP stretch occupies residues serine 30–valine 59. AMP contacts are provided by residues threonine 31, arginine 36, glutamine 57 to valine 59, glycine 85 to arginine 88, and glutamine 92. Residues glycine 121–aspartate 158 are LID. Arginine 122 contacts ATP. Zn(2+) contacts are provided by cysteine 125 and cysteine 128. Position 131-132 (isoleucine 131–phenylalanine 132) interacts with ATP. Residues cysteine 145 and cysteine 148 each contribute to the Zn(2+) site. AMP is bound by residues arginine 155 and arginine 166. Lysine 194 is an ATP binding site.

Belongs to the adenylate kinase family. Monomer.

It is found in the cytoplasm. The catalysed reaction is AMP + ATP = 2 ADP. It functions in the pathway purine metabolism; AMP biosynthesis via salvage pathway; AMP from ADP: step 1/1. In terms of biological role, catalyzes the reversible transfer of the terminal phosphate group between ATP and AMP. Plays an important role in cellular energy homeostasis and in adenine nucleotide metabolism. This Borrelia turicatae (strain 91E135) protein is Adenylate kinase.